Here is a 369-residue protein sequence, read N- to C-terminus: Anhydro-N-acetylmuramic acid kinase (369 aa).

12-19 (GTSLDGVD) is a binding site for ATP.

This sequence belongs to the anhydro-N-acetylmuramic acid kinase family.

It catalyses the reaction 1,6-anhydro-N-acetyl-beta-muramate + ATP + H2O = N-acetyl-D-muramate 6-phosphate + ADP + H(+). Its pathway is amino-sugar metabolism; 1,6-anhydro-N-acetylmuramate degradation. It participates in cell wall biogenesis; peptidoglycan recycling. In terms of biological role, catalyzes the specific phosphorylation of 1,6-anhydro-N-acetylmuramic acid (anhMurNAc) with the simultaneous cleavage of the 1,6-anhydro ring, generating MurNAc-6-P. Is required for the utilization of anhMurNAc either imported from the medium or derived from its own cell wall murein, and thus plays a role in cell wall recycling. In Shigella flexneri, this protein is Anhydro-N-acetylmuramic acid kinase.